The chain runs to 227 residues: Urease accessory protein UreF (227 aa).

It belongs to the UreF family. UreD, UreF and UreG form a complex that acts as a GTP-hydrolysis-dependent molecular chaperone, activating the urease apoprotein by helping to assemble the nickel containing metallocenter of UreC. The UreE protein probably delivers the nickel.

It is found in the cytoplasm. Required for maturation of urease via the functional incorporation of the urease nickel metallocenter. This is Urease accessory protein UreF from Actinobacillus pleuropneumoniae (Haemophilus pleuropneumoniae).